Consider the following 466-residue polypeptide: Soluble pyridine nucleotide transhydrogenase (466 aa).

36–45 (ERYHNVGGGC) lines the FAD pocket.

The protein belongs to the class-I pyridine nucleotide-disulfide oxidoreductase family. FAD is required as a cofactor.

The protein localises to the cytoplasm. The enzyme catalyses NAD(+) + NADPH = NADH + NADP(+). In terms of biological role, conversion of NADPH, generated by peripheral catabolic pathways, to NADH, which can enter the respiratory chain for energy generation. In Enterobacter sp. (strain 638), this protein is Soluble pyridine nucleotide transhydrogenase.